The following is a 223-amino-acid chain: Deoxyribose-phosphate aldolase (223 aa).

D92 (proton donor/acceptor) is an active-site residue. K153 acts as the Schiff-base intermediate with acetaldehyde in catalysis. K182 acts as the Proton donor/acceptor in catalysis.

This sequence belongs to the DeoC/FbaB aldolase family. DeoC type 1 subfamily.

The protein localises to the cytoplasm. The enzyme catalyses 2-deoxy-D-ribose 5-phosphate = D-glyceraldehyde 3-phosphate + acetaldehyde. Its pathway is carbohydrate degradation; 2-deoxy-D-ribose 1-phosphate degradation; D-glyceraldehyde 3-phosphate and acetaldehyde from 2-deoxy-alpha-D-ribose 1-phosphate: step 2/2. Its function is as follows. Catalyzes a reversible aldol reaction between acetaldehyde and D-glyceraldehyde 3-phosphate to generate 2-deoxy-D-ribose 5-phosphate. The chain is Deoxyribose-phosphate aldolase from Mycoplasmoides gallisepticum (strain R(low / passage 15 / clone 2)) (Mycoplasma gallisepticum).